The primary structure comprises 593 residues: NADH-quinone oxidoreductase subunit C/D (593 aa).

An NADH dehydrogenase I subunit C region spans residues 1 to 184; it reads MTADSALYIP…DPYSLSAAKQ (184 aa). An NADH dehydrogenase I subunit D region spans residues 208–593; it reads DYMFLNLGPN…IDFVMADVDR (386 aa).

The protein in the N-terminal section; belongs to the complex I 30 kDa subunit family. In the C-terminal section; belongs to the complex I 49 kDa subunit family. NDH-1 is composed of 13 different subunits. Subunits NuoB, CD, E, F, and G constitute the peripheral sector of the complex.

It is found in the cell inner membrane. The enzyme catalyses a quinone + NADH + 5 H(+)(in) = a quinol + NAD(+) + 4 H(+)(out). In terms of biological role, NDH-1 shuttles electrons from NADH, via FMN and iron-sulfur (Fe-S) centers, to quinones in the respiratory chain. The immediate electron acceptor for the enzyme in this species is believed to be ubiquinone. Couples the redox reaction to proton translocation (for every two electrons transferred, four hydrogen ions are translocated across the cytoplasmic membrane), and thus conserves the redox energy in a proton gradient. This Pseudomonas paraeruginosa (strain DSM 24068 / PA7) (Pseudomonas aeruginosa (strain PA7)) protein is NADH-quinone oxidoreductase subunit C/D.